The following is a 129-amino-acid chain: M-zodatoxin-Lt8d (129 aa).

The first 20 residues, 1-20, serve as a signal peptide directing secretion; that stretch reads MKYFVVALALVAAFACIAES. Residues 21 to 60 constitute a propeptide that is removed on maturation; that stretch reads KPAESEHELAEVEEENELADLEDAVWLEHLADLSDLEEAR. The Processing quadruplet motif signature appears at 57–60; sequence EEAR.

Cleavage of the propeptide depends on the processing quadruplet motif (XXXR, with at least one of X being E). In terms of tissue distribution, expressed by the venom gland.

The protein resides in the secreted. Its function is as follows. Insecticidal, cytolytic and antimicrobial peptide. Forms voltage-dependent, ion-permeable channels in membranes. At high concentration causes cell membrane lysis. This is M-zodatoxin-Lt8d (cit 1-4) from Lachesana tarabaevi (Spider).